The following is a 74-amino-acid chain: Homeobox protein H40 (74 aa).

A DNA-binding region (homeobox) is located at residues 8-67 (ARRARTAFTYEQLVALENKFKTTRYLSVCERLNLALSLSLTETQVKIWFQNRRTKWKKQN).

It localises to the nucleus. The sequence is that of Homeobox protein H40 from Apis mellifera (Honeybee).